A 253-amino-acid polypeptide reads, in one-letter code: Geranylgeranylglyceryl phosphate synthase (253 aa).

The Mg(2+) site is built by aspartate 23 and serine 52. Sn-glycerol 1-phosphate contacts are provided by residues 171 to 177 (YFEAGSG), 202 to 203 (GG), and 224 to 225 (GT).

Belongs to the GGGP/HepGP synthase family. Group II subfamily. Homodimer. Mg(2+) serves as cofactor.

The protein localises to the cytoplasm. The enzyme catalyses sn-glycerol 1-phosphate + (2E,6E,10E)-geranylgeranyl diphosphate = sn-3-O-(geranylgeranyl)glycerol 1-phosphate + diphosphate. The protein operates within membrane lipid metabolism; glycerophospholipid metabolism. Its activity is regulated as follows. Inhibited by high concentrations of magnesium (&gt;10 mM) and by EDTA in vitro. In terms of biological role, prenyltransferase that catalyzes the transfer of the geranylgeranyl moiety of geranylgeranyl diphosphate (GGPP) to the C3 hydroxyl of sn-glycerol-1-phosphate (G1P). This reaction is the first ether-bond-formation step in the biosynthesis of archaeal membrane lipids. Cannot use sn-glycerol-3-phosphate (G3P) as substrate. In Thermoplasma acidophilum (strain ATCC 25905 / DSM 1728 / JCM 9062 / NBRC 15155 / AMRC-C165), this protein is Geranylgeranylglyceryl phosphate synthase.